The sequence spans 348 residues: Methylthioribose-1-phosphate isomerase (348 aa).

Residues 46 to 48 (RGA), arginine 88, and glutamine 194 contribute to the substrate site. Aspartate 235 serves as the catalytic Proton donor. 245–246 (NK) is a substrate binding site.

The protein belongs to the eIF-2B alpha/beta/delta subunits family. MtnA subfamily.

It carries out the reaction 5-(methylsulfanyl)-alpha-D-ribose 1-phosphate = 5-(methylsulfanyl)-D-ribulose 1-phosphate. It participates in amino-acid biosynthesis; L-methionine biosynthesis via salvage pathway; L-methionine from S-methyl-5-thio-alpha-D-ribose 1-phosphate: step 1/6. In terms of biological role, catalyzes the interconversion of methylthioribose-1-phosphate (MTR-1-P) into methylthioribulose-1-phosphate (MTRu-1-P). This is Methylthioribose-1-phosphate isomerase from Desulforudis audaxviator (strain MP104C).